Reading from the N-terminus, the 323-residue chain is Ferrochelatase (323 aa).

Positions 196 and 277 each coordinate Fe cation.

This sequence belongs to the ferrochelatase family.

It is found in the cytoplasm. The catalysed reaction is heme b + 2 H(+) = protoporphyrin IX + Fe(2+). The protein operates within porphyrin-containing compound metabolism; protoheme biosynthesis; protoheme from protoporphyrin-IX: step 1/1. Catalyzes the ferrous insertion into protoporphyrin IX. In Haemophilus influenzae (strain 86-028NP), this protein is Ferrochelatase.